The primary structure comprises 112 residues: Large ribosomal subunit protein eL30 (112 aa).

Belongs to the eukaryotic ribosomal protein eL30 family.

The protein is Large ribosomal subunit protein eL30 (RPL30) of Lupinus luteus (European yellow lupine).